A 329-amino-acid polypeptide reads, in one-letter code: MPTSRPFVLTPGEPAGIGPDLCLLLARQAQPRPLVAIASRALLAQRAEQLGLSIELRDAGPQDWPGEPAPANCLYVWDTPLATAVTAGQLDPRNAHYVLETLTRAGRGCLDGSFAGIITAPVHKGVINEAGIPFSGHTEFLAELTLTEQVVMMLATRGLRVALVTTHLPLRDVAEAITAERLQRVTRILHADLVSKFGIARPRILVCGLNPHAGEGGHLGREEIEVIEPTLAGLREEGIELIGPLPADTLFTPKHLEHCDAVLAMYHDQGLPVLKYKGFGAAVNVTLGLPIVRTSVDHGTALDLAGTGRVDIGSLQVALETAYQMSGAA.

Residues H137 and T138 each contribute to the substrate site. Positions 167, 212, and 267 each coordinate a divalent metal cation. Substrate contacts are provided by K275, N284, and R293.

The protein belongs to the PdxA family. In terms of assembly, homodimer. Requires Zn(2+) as cofactor. The cofactor is Mg(2+). It depends on Co(2+) as a cofactor.

It localises to the cytoplasm. The enzyme catalyses 4-(phosphooxy)-L-threonine + NAD(+) = 3-amino-2-oxopropyl phosphate + CO2 + NADH. It functions in the pathway cofactor biosynthesis; pyridoxine 5'-phosphate biosynthesis; pyridoxine 5'-phosphate from D-erythrose 4-phosphate: step 4/5. Its function is as follows. Catalyzes the NAD(P)-dependent oxidation of 4-(phosphooxy)-L-threonine (HTP) into 2-amino-3-oxo-4-(phosphooxy)butyric acid which spontaneously decarboxylates to form 3-amino-2-oxopropyl phosphate (AHAP). In Stutzerimonas stutzeri (strain A1501) (Pseudomonas stutzeri), this protein is 4-hydroxythreonine-4-phosphate dehydrogenase.